A 167-amino-acid chain; its full sequence is MFLNLLDAPRRLLALVALGCVALLAFGLYLQHVVGLEPCPMCIVQRYALVLVAIVAGLTAITSNKKGLITGSGVLLLLAGFGAFVAARQSFLQWYPPEVASCGRDFYGMIETFPLQRAIPMIFKGSGDCAKVDWTFLGGSIANWSFVCFAVIGLTALTLIARLARQR.

Residues 1–12 (MFLNLLDAPRRL) are Cytoplasmic-facing. Residues 13 to 29 (LALVALGCVALLAFGLY) form a helical membrane-spanning segment. Topologically, residues 30-47 (LQHVVGLEPCPMCIVQRY) are periplasmic. C39 and C42 are oxidised to a cystine. Residues 48–63 (ALVLVAIVAGLTAITS) traverse the membrane as a helical segment. The Cytoplasmic portion of the chain corresponds to 64 to 69 (NKKGLI). Residues 70-87 (TGSGVLLLLAGFGAFVAA) form a helical membrane-spanning segment. The Periplasmic portion of the chain corresponds to 88-143 (RQSFLQWYPPEVASCGRDFYGMIETFPLQRAIPMIFKGSGDCAKVDWTFLGGSIAN). C102 and C129 are joined by a disulfide. A helical transmembrane segment spans residues 144–162 (WSFVCFAVIGLTALTLIAR). At 163-167 (LARQR) the chain is on the cytoplasmic side.

The protein belongs to the DsbB family.

The protein resides in the cell inner membrane. Required for disulfide bond formation in some periplasmic proteins. Acts by oxidizing the DsbA protein. This chain is Disulfide bond formation protein B, found in Polaromonas naphthalenivorans (strain CJ2).